The sequence spans 365 residues: Chaperone protein DnaJ (365 aa).

Residues 4 to 70 (DYYKILGVDR…QKRRMYDQTG (67 aa)) form the J domain. The segment at 139-220 (GTEKRIKYRR…CNGTGTVVVN (82 aa)) adopts a CR-type zinc-finger fold. Residues cysteine 152, cysteine 155, cysteine 168, cysteine 171, cysteine 194, cysteine 197, cysteine 208, and cysteine 211 each coordinate Zn(2+). 4 CXXCXGXG motif repeats span residues 152–159 (CPDCNGTG), 168–175 (CPTCNGTG), 194–201 (CQTCGGRG), and 208–215 (CPRCNGTG).

It belongs to the DnaJ family. Homodimer. Zn(2+) is required as a cofactor.

It is found in the cytoplasm. Participates actively in the response to hyperosmotic and heat shock by preventing the aggregation of stress-denatured proteins and by disaggregating proteins, also in an autonomous, DnaK-independent fashion. Unfolded proteins bind initially to DnaJ; upon interaction with the DnaJ-bound protein, DnaK hydrolyzes its bound ATP, resulting in the formation of a stable complex. GrpE releases ADP from DnaK; ATP binding to DnaK triggers the release of the substrate protein, thus completing the reaction cycle. Several rounds of ATP-dependent interactions between DnaJ, DnaK and GrpE are required for fully efficient folding. Also involved, together with DnaK and GrpE, in the DNA replication of plasmids through activation of initiation proteins. The chain is Chaperone protein DnaJ from Thermoplasma acidophilum (strain ATCC 25905 / DSM 1728 / JCM 9062 / NBRC 15155 / AMRC-C165).